Here is a 92-residue protein sequence, read N- to C-terminus: Small ribosomal subunit protein uS19c (92 aa).

It belongs to the universal ribosomal protein uS19 family.

Its subcellular location is the plastid. The protein localises to the chloroplast. Protein S19 forms a complex with S13 that binds strongly to the 16S ribosomal RNA. The polypeptide is Small ribosomal subunit protein uS19c (Chaetosphaeridium globosum (Charophycean green alga)).